The sequence spans 518 residues: UPF0053 inner membrane protein YoaE (518 aa).

Topologically, residues 1–13 (MEFLMDPSIWAGL) are cytoplasmic. A helical transmembrane segment spans residues 14 to 34 (LTLVVLEIVLGIDNLVFIAIL). Residues 35–48 (ADKLPPKQRDKARL) lie on the Periplasmic side of the membrane. A helical membrane pass occupies residues 49 to 69 (LGLSLALIMRLGLLSLISWMV). The Cytoplasmic segment spans residues 70–78 (TLTKPLFTV). A helical membrane pass occupies residues 79–99 (MDFSFSGRDLIMLFGGIFLLF). Residues 100 to 124 (KATTELHERLENRDHDSGHGKGYAS) lie on the Periplasmic side of the membrane. A helical transmembrane segment spans residues 125 to 145 (FWVVVTQIVILDAVFSLDAVI). The Cytoplasmic segment spans residues 146–149 (TAVG). A helical membrane pass occupies residues 150-170 (MVNHLPVMMAAVVIAMAVMLL). Over 171 to 184 (ASKPLTRFVNQHPT) the chain is Periplasmic. Residues 185-205 (VVVLCLSFLLMIGLSLVAEGF) traverse the membrane as a helical segment. Position 206 (G206) is a topological domain, cytoplasmic. Residues 207–227 (FHIPKGYLYAAIGFSIIIEVF) form a helical membrane-spanning segment. Over 228–354 (NQIARRNFIR…IGIVRAKELL (127 aa)) the chain is Periplasmic. 2 consecutive CBS domains span residues 304–363 (MTPR…GVDV) and 367–427 (ASAS…DADE). The chain crosses the membrane as a helical span at residues 355–375 (VALEEGVDVAAIASASPAIIV). At 376–518 (PETLDPINLL…KEQPAHDEDE (143 aa)) the chain is on the cytoplasmic side.

Belongs to the UPF0053 family.

The protein localises to the cell inner membrane. This Escherichia coli O157:H7 protein is UPF0053 inner membrane protein YoaE (yoaE).